Here is a 528-residue protein sequence, read N- to C-terminus: Linear element-associated protein hop1 (528 aa).

In terms of domain architecture, HORMA spans 11-212 (TKSDFTLKNL…RGEFKDIVSF (202 aa)). The PHD-type zinc finger occupies 334–385 (LLNCECGDSTEDSEMFQCERCDGWVHCACYGFESDSDPRQPNQLLCYTCLLV). Zn(2+) contacts are provided by C337, C339, C351, C354, H359, C362, C379, and C382. Residues 507–528 (RPKKVSKTSNTKETDTMKPLRI) are disordered. The span at 516 to 528 (NTKETDTMKPLRI) shows a compositional bias: basic and acidic residues.

As to quaternary structure, interacts (via N-terminus) with rec10; the interaction is direct. Interacts (via C-terminus) with rec15 (via C-terminus); the interaction is direct.

The protein localises to the nucleus. It localises to the chromosome. Functionally, facilitates initiation of meiotic recombination and DNA double-strand break (DSB) formation at DSB hotspot sites by enhancing the interaction between rec10 and rec15. This chain is Linear element-associated protein hop1, found in Schizosaccharomyces pombe (strain 972 / ATCC 24843) (Fission yeast).